A 219-amino-acid polypeptide reads, in one-letter code: Claudin-20 (219 aa).

The Cytoplasmic segment spans residues 1 to 7 (MASAGLQ). The helical transmembrane segment at 8–28 (LLAFILALSGVSGVLTATLLP) threads the bilayer. At 29 to 81 (NWKVNVDVDSNIITAIVQLHGLWMDCTWYSTGMFSCALKHSILSLPIHVQAAR) the chain is on the extracellular side. A helical membrane pass occupies residues 82 to 102 (ATMVLACVLSALGICTSTVGM). Topologically, residues 103–118 (KCTRLGGDRETKSHAS) are cytoplasmic. A helical transmembrane segment spans residues 119–139 (FAGGVCFMSAGISSLISTVWY). Topologically, residues 140-160 (TKEIIANFLDLTVPESNKHEP) are extracellular. Residues 161-181 (GGAIYIGFISAMLLFISGMIF) traverse the membrane as a helical segment. The Cytoplasmic portion of the chain corresponds to 182–219 (CTSCIKRNPEARLDPPTQQPISNTQLENNSTHNLKDYV). The tract at residues 193–219 (RLDPPTQQPISNTQLENNSTHNLKDYV) is disordered. Over residues 200–213 (QPISNTQLENNSTH) the composition is skewed to polar residues.

This sequence belongs to the claudin family.

Its subcellular location is the cell junction. The protein localises to the tight junction. It is found in the cell membrane. Functionally, plays a major role in tight junction-specific obliteration of the intercellular space, through calcium-independent cell-adhesion activity. This Homo sapiens (Human) protein is Claudin-20 (CLDN20).